A 561-amino-acid chain; its full sequence is Arginine--tRNA ligase (561 aa).

Positions 129–139 match the 'HIGH' region motif; sequence ANPTGPLHVGH.

Belongs to the class-I aminoacyl-tRNA synthetase family. As to quaternary structure, monomer.

Its subcellular location is the cytoplasm. The catalysed reaction is tRNA(Arg) + L-arginine + ATP = L-arginyl-tRNA(Arg) + AMP + diphosphate. This Bordetella avium (strain 197N) protein is Arginine--tRNA ligase.